Here is a 518-residue protein sequence, read N- to C-terminus: Glutamate--cysteine ligase (518 aa).

This sequence belongs to the glutamate--cysteine ligase type 1 family. Type 1 subfamily.

The enzyme catalyses L-cysteine + L-glutamate + ATP = gamma-L-glutamyl-L-cysteine + ADP + phosphate + H(+). Its pathway is sulfur metabolism; glutathione biosynthesis; glutathione from L-cysteine and L-glutamate: step 1/2. In Escherichia coli O7:K1 (strain IAI39 / ExPEC), this protein is Glutamate--cysteine ligase.